The chain runs to 319 residues: Pantothenate kinase (319 aa).

101-108 (GSVAVGKS) contacts ATP.

It belongs to the prokaryotic pantothenate kinase family.

Its subcellular location is the cytoplasm. The enzyme catalyses (R)-pantothenate + ATP = (R)-4'-phosphopantothenate + ADP + H(+). It functions in the pathway cofactor biosynthesis; coenzyme A biosynthesis; CoA from (R)-pantothenate: step 1/5. In Clavibacter michiganensis subsp. michiganensis (strain NCPPB 382), this protein is Pantothenate kinase.